The primary structure comprises 369 residues: MIKLKQLIAATLLLSTAFGVHAERLKDIASISGVRANQLIGYGLVVGLNGTGDQTTQTPFTLQTFNNMLSQFGIKVPAGSGTVQLKNVAAVAVYADLPAFAKPGQTVDITVSSIGNSKSLRGGALLMTPMKGVDGNVYAIAQGNLVVGGFDAEGRDGSKITVNVPSSGRIPGGASVERSVPSGFNQGNTLTLNLNRSDFTTAKRIVDKINELLGPGVAQALDGGSVRVTAPLDPGQRVDYLSILENLEVDPGQTAAKVIINSRTGTIVIGQNVKVSPAAVTHGSLTVTITEDPIVSQPGALSGGQTAVVPRSRVNAQQELHPMFKFGPGTTLDEIVRAVNQVGAAPGDLMAILEALKQAGALQADLIVI.

The first 22 residues, 1-22 (MIKLKQLIAATLLLSTAFGVHA), serve as a signal peptide directing secretion.

The protein belongs to the FlgI family. The basal body constitutes a major portion of the flagellar organelle and consists of four rings (L,P,S, and M) mounted on a central rod.

Its subcellular location is the periplasm. It localises to the bacterial flagellum basal body. Its function is as follows. Assembles around the rod to form the L-ring and probably protects the motor/basal body from shearing forces during rotation. This chain is Flagellar P-ring protein, found in Pseudomonas syringae pv. syringae (strain B728a).